The chain runs to 146 residues: Large ribosomal subunit protein uL15 (146 aa).

A compositionally biased stretch (basic and acidic residues) spans 1 to 18 (MKLHELKPSEGSRKERNR). Positions 1–57 (MKLHELKPSEGSRKERNRVGRGIGSGNGKTSGKGHKGQNARSGGGVRPGFEGGQMPL) are disordered. Composition is skewed to gly residues over residues 21-31 (RGIGSGNGKTS) and 42-52 (SGGGVRPGFEG).

It belongs to the universal ribosomal protein uL15 family. As to quaternary structure, part of the 50S ribosomal subunit.

Its function is as follows. Binds to the 23S rRNA. This is Large ribosomal subunit protein uL15 from Bacillus pumilus (strain SAFR-032).